Consider the following 498-residue polypeptide: ATP synthase subunit beta, chloroplastic (498 aa).

172 to 179 (GGAGVGKT) contributes to the ATP binding site.

It belongs to the ATPase alpha/beta chains family. F-type ATPases have 2 components, CF(1) - the catalytic core - and CF(0) - the membrane proton channel. CF(1) has five subunits: alpha(3), beta(3), gamma(1), delta(1), epsilon(1). CF(0) has four main subunits: a(1), b(1), b'(1) and c(9-12).

It is found in the plastid. Its subcellular location is the chloroplast thylakoid membrane. It carries out the reaction ATP + H2O + 4 H(+)(in) = ADP + phosphate + 5 H(+)(out). In terms of biological role, produces ATP from ADP in the presence of a proton gradient across the membrane. The catalytic sites are hosted primarily by the beta subunits. This is ATP synthase subunit beta, chloroplastic from Nicotiana rustica (Aztec tobacco).